Reading from the N-terminus, the 208-residue chain is Small ribosomal subunit protein eS8 (208 aa).

Residues 1–27 (MGISRDNWHKRRKTGGKRKPYHKKRKY) form a disordered region. Gly-2 is lipidated: N-myristoyl glycine. A compositionally biased stretch (basic residues) spans 8–26 (WHKRRKTGGKRKPYHKKRK). Residues Lys-37 and Lys-128 each carry the N6-acetyllysine modification. Residue Thr-130 is modified to Phosphothreonine. Ser-160 is subject to Phosphoserine. Glycyl lysine isopeptide (Lys-Gly) (interchain with G-Cter in SUMO2) cross-links involve residues Lys-170 and Lys-193.

It belongs to the eukaryotic ribosomal protein eS8 family. In terms of assembly, component of the small ribosomal subunit. Identified in a IGF2BP1-dependent mRNP granule complex containing untranslated mRNAs. Part of the small subunit (SSU) processome, composed of more than 70 proteins and the RNA chaperone small nucleolar RNA (snoRNA) U3.

Its subcellular location is the cytoplasm. The protein resides in the membrane. The protein localises to the nucleus. It localises to the nucleolus. Its function is as follows. Component of the small ribosomal subunit. The ribosome is a large ribonucleoprotein complex responsible for the synthesis of proteins in the cell. Part of the small subunit (SSU) processome, first precursor of the small eukaryotic ribosomal subunit. During the assembly of the SSU processome in the nucleolus, many ribosome biogenesis factors, an RNA chaperone and ribosomal proteins associate with the nascent pre-rRNA and work in concert to generate RNA folding, modifications, rearrangements and cleavage as well as targeted degradation of pre-ribosomal RNA by the RNA exosome. The chain is Small ribosomal subunit protein eS8 (RPS8) from Oryctolagus cuniculus (Rabbit).